Reading from the N-terminus, the 357-residue chain is Peptide chain release factor 1 (357 aa).

Gln232 is modified (N5-methylglutamine). Positions 284 to 304 (AERAAERKGQIGSGDRSERIR) are enriched in basic and acidic residues. Residues 284–308 (AERAAERKGQIGSGDRSERIRTYNY) form a disordered region.

This sequence belongs to the prokaryotic/mitochondrial release factor family. Post-translationally, methylated by PrmC. Methylation increases the termination efficiency of RF1.

It localises to the cytoplasm. In terms of biological role, peptide chain release factor 1 directs the termination of translation in response to the peptide chain termination codons UAG and UAA. This Maricaulis maris (strain MCS10) (Caulobacter maris) protein is Peptide chain release factor 1.